The sequence spans 502 residues: Probable cytosol aminopeptidase (502 aa).

Mn(2+) is bound by residues lysine 269 and aspartate 274. Lysine 281 is an active-site residue. Mn(2+)-binding residues include aspartate 292, aspartate 351, and glutamate 353. Residue arginine 355 is part of the active site.

It belongs to the peptidase M17 family. It depends on Mn(2+) as a cofactor.

Its subcellular location is the cytoplasm. It catalyses the reaction Release of an N-terminal amino acid, Xaa-|-Yaa-, in which Xaa is preferably Leu, but may be other amino acids including Pro although not Arg or Lys, and Yaa may be Pro. Amino acid amides and methyl esters are also readily hydrolyzed, but rates on arylamides are exceedingly low.. The catalysed reaction is Release of an N-terminal amino acid, preferentially leucine, but not glutamic or aspartic acids.. Its function is as follows. Presumably involved in the processing and regular turnover of intracellular proteins. Catalyzes the removal of unsubstituted N-terminal amino acids from various peptides. This Vibrio campbellii (strain ATCC BAA-1116) protein is Probable cytosol aminopeptidase.